Reading from the N-terminus, the 242-residue chain is Glucosamine-6-phosphate deaminase (242 aa).

The active-site Proton acceptor; for enolization step is aspartate 67. The active-site For ring-opening step is asparagine 137. Catalysis depends on histidine 139, which acts as the Proton acceptor; for ring-opening step. The For ring-opening step role is filled by glutamate 144.

It belongs to the glucosamine/galactosamine-6-phosphate isomerase family. NagB subfamily.

The catalysed reaction is alpha-D-glucosamine 6-phosphate + H2O = beta-D-fructose 6-phosphate + NH4(+). It functions in the pathway amino-sugar metabolism; N-acetylneuraminate degradation; D-fructose 6-phosphate from N-acetylneuraminate: step 5/5. Its function is as follows. Catalyzes the reversible isomerization-deamination of glucosamine 6-phosphate (GlcN6P) to form fructose 6-phosphate (Fru6P) and ammonium ion. The polypeptide is Glucosamine-6-phosphate deaminase (Staphylococcus haemolyticus (strain JCSC1435)).